Reading from the N-terminus, the 229-residue chain is Adenine nucleotide translocase lysine N-methyltransferase (229 aa).

Residues 1–22 are N-terminal sequence (NTS); the sequence is MDQDDPAEALTELREKRLGLLE. A helical membrane pass occupies residues 20–42; it reads LLEIVQAAAGSGLAVYTIWALLL. Residues 43 to 77 are methyltransferase (MTase); the sequence is QPGFRRVPLRLQVPYVGASARQVENVLSLLRGRPG. Residues 43–77 are pre-methyltransferase (preMT); that stretch reads QPGFRRVPLRLQVPYVGASARQVENVLSLLRGRPG.

Belongs to the ANT/ATPSC lysine N-methyltransferase family.

The protein localises to the mitochondrion membrane. It catalyses the reaction L-lysyl-[protein] + 3 S-adenosyl-L-methionine = N(6),N(6),N(6)-trimethyl-L-lysyl-[protein] + 3 S-adenosyl-L-homocysteine + 3 H(+). In terms of biological role, mitochondrial protein-lysine N-methyltransferase that trimethylates adenine nucleotide translocases ANT2/SLC25A5 and ANT3/SLC25A6, thereby regulating mitochondrial respiration. Probably also trimethylates ANT1/SLC25A4. This Mus musculus (Mouse) protein is Adenine nucleotide translocase lysine N-methyltransferase.